A 492-amino-acid chain; its full sequence is Probable serine/threonine-protein kinase WNK9 (492 aa).

The Protein kinase domain occupies 25 to 282 (GRYNEVLGKG…ACELLDDHFL (258 aa)). ATP is bound by residues 105–108 (TEMF) and K155. Residue D172 is the Proton acceptor of the active site.

The protein belongs to the protein kinase superfamily. Ser/Thr protein kinase family. WNK subfamily.

It catalyses the reaction L-seryl-[protein] + ATP = O-phospho-L-seryl-[protein] + ADP + H(+). The catalysed reaction is L-threonyl-[protein] + ATP = O-phospho-L-threonyl-[protein] + ADP + H(+). In terms of biological role, may regulate flowering time by modulating the photoperiod pathway. The chain is Probable serine/threonine-protein kinase WNK9 (WNK9) from Arabidopsis thaliana (Mouse-ear cress).